We begin with the raw amino-acid sequence, 411 residues long: Flavohemoprotein (411 aa).

In terms of domain architecture, Globin spans 5–142 (TLSQETKQIV…IADVFIQVEK (138 aa)). His-89 lines the heme b pocket. Catalysis depends on charge relay system residues Tyr-99 and Glu-141. The interval 153–411 (GGWREFRSFV…FGPAGTLASS (259 aa)) is reductase. An FAD-binding FR-type domain is found at 156–267 (REFRSFVVEK…TAPAGDFTLQ (112 aa)). FAD contacts are provided by residues Tyr-194 and 210–213 (RQYS). 280-285 (GVGITP) is an NADP(+) binding site. 401–404 (FFGP) is a binding site for FAD.

It belongs to the globin family. Two-domain flavohemoproteins subfamily. In the C-terminal section; belongs to the flavoprotein pyridine nucleotide cytochrome reductase family. The cofactor is heme b. Requires FAD as cofactor.

The catalysed reaction is 2 nitric oxide + NADPH + 2 O2 = 2 nitrate + NADP(+) + H(+). It carries out the reaction 2 nitric oxide + NADH + 2 O2 = 2 nitrate + NAD(+) + H(+). Is involved in NO detoxification in an aerobic process, termed nitric oxide dioxygenase (NOD) reaction that utilizes O(2) and NAD(P)H to convert NO to nitrate, which protects the bacterium from various noxious nitrogen compounds. Therefore, plays a central role in the inducible response to nitrosative stress. This Halalkalibacterium halodurans (strain ATCC BAA-125 / DSM 18197 / FERM 7344 / JCM 9153 / C-125) (Bacillus halodurans) protein is Flavohemoprotein.